The sequence spans 509 residues: MERVRIFDTTLRDGEQSPGVSLNAMEKLQIARQLQKLGVDVIEAGFPITSPGDKEAVSLIAREVKGVVVAALARASALDIETAWDAIKDAESPRIHTFIATSDIHLKYKLKMDRETVVERAVAAVKLAKKFTADVEFSAEDASRSDLDFLCRVVEAAVKAGATTINIPDTVGYAEPEEFGEFICKILEKVPVMDRAVLSVHCHDDLGLAVANSLAAIKNGARQVECTINGIGERAGNCSLEEIVMALYTRKDVLPFYTGIKTEEIYRTSKLVSNLTGMPVQPNKAIVGKNAFSHESGIHQDGVLKERTTYEIMNPRLVGIPESRLVLGKHSGRHALKERLLELGYELTEEQLNEAFVKFKALADKKKEVTDQDLEAMMEEEIRKVPETYTLDYFHISTGSTIIPTATVGLIKEGEKLEDAATGDGPVDAIYKAINKITGLTPVLEQYSINAVTSGEDALGEVVVKLKNGLGKIVTGRGVSTDILEASAKAYLNGINKLLFDYQAKGEKQ.

The Pyruvate carboxyltransferase domain maps to 4–266; the sequence is VRIFDTTLRD…YTGIKTEEIY (263 aa). Residues D13, H201, H203, and N237 each contribute to the Mn(2+) site. The regulatory domain stretch occupies residues 390 to 509; that stretch reads TLDYFHISTG…FDYQAKGEKQ (120 aa).

The protein belongs to the alpha-IPM synthase/homocitrate synthase family. LeuA type 1 subfamily. As to quaternary structure, homodimer. The cofactor is Mn(2+).

It is found in the cytoplasm. The catalysed reaction is 3-methyl-2-oxobutanoate + acetyl-CoA + H2O = (2S)-2-isopropylmalate + CoA + H(+). Its pathway is amino-acid biosynthesis; L-leucine biosynthesis; L-leucine from 3-methyl-2-oxobutanoate: step 1/4. Catalyzes the condensation of the acetyl group of acetyl-CoA with 3-methyl-2-oxobutanoate (2-ketoisovalerate) to form 3-carboxy-3-hydroxy-4-methylpentanoate (2-isopropylmalate). In Carboxydothermus hydrogenoformans (strain ATCC BAA-161 / DSM 6008 / Z-2901), this protein is 2-isopropylmalate synthase.